The primary structure comprises 427 residues: Flavohemoprotein (427 aa).

The Globin domain maps to 30-168 (ELNESQKQYI…LAKILIDSEK (139 aa)). Histidine 114 provides a ligand contact to heme b. Catalysis depends on charge relay system residues tyrosine 124 and glutamate 167. The interval 176–427 (WNGFVEFKVT…QSEFFGPYIP (252 aa)) is reductase. The FAD-binding FR-type domain occupies 177–285 (NGFVEFKVTE…SPPAGNFVYK (109 aa)). Residues tyrosine 216 and 232 to 235 (REYS) each bind FAD. Residue 301–306 (GIGITP) participates in NADP(+) binding. Residue 421 to 424 (FFGP) coordinates FAD.

Belongs to the globin family. Two-domain flavohemoproteins subfamily. It in the C-terminal section; belongs to the flavoprotein pyridine nucleotide cytochrome reductase family. FAD is required as a cofactor. It depends on heme b as a cofactor.

The protein resides in the cytoplasm. It localises to the nucleus. The enzyme catalyses 2 nitric oxide + NADPH + 2 O2 = 2 nitrate + NADP(+) + H(+). It catalyses the reaction 2 nitric oxide + NADH + 2 O2 = 2 nitrate + NAD(+) + H(+). Is involved in NO detoxification in an aerobic process, termed nitric oxide dioxygenase (NOD) reaction that utilizes O(2) and NAD(P)H to convert NO to nitrate, which protects the fungus from various noxious nitrogen compounds. Therefore, plays a central role in the inducible response to nitrosative stress. Functionally, in the presence of oxygen and NADH, it has NADH oxidase activity, which leads to the generation of superoxide and H(2)O(2). Under anaerobic conditions, it also exhibits nitric oxide reductase and FAD reductase activities. However, all these reactions are much lower than NOD activity. In Schizosaccharomyces pombe (strain 972 / ATCC 24843) (Fission yeast), this protein is Flavohemoprotein.